The sequence spans 54 residues: Preprotein translocase subunit SecG (54 aa).

The Cytoplasmic portion of the chain corresponds to 1–31 (MSSGSNSGGLMSSAGLVRYFDSEDRDAIAID). A helical transmembrane segment spans residues 32–53 (PKTVLAFCVLFGVFVQILSLTV). A topological domain (extracellular) is located at residue Ala-54.

The protein belongs to the SEC61-beta family. Component of the protein translocase complex. Heterotrimer consisting of alpha (SecY), beta (SecG) and gamma (SecE) subunits. Can form oligomers of the heterotrimer.

It is found in the cell membrane. In terms of biological role, involved in protein export. The function of the beta subunit is unknown, but it may be involved in stabilization of the trimeric complex. The chain is Preprotein translocase subunit SecG from Halorubrum lacusprofundi (strain ATCC 49239 / DSM 5036 / JCM 8891 / ACAM 34).